Here is a 498-residue protein sequence, read N- to C-terminus: GPI mannosyltransferase 4 (498 aa).

A helical membrane pass occupies residues 11-31 (FYLLTIVFRFVFTLSDSYIHP). N-linked (GlcNAc...) asparagine glycosylation occurs at N47. Residues 63–83 (SLAPLYFIYGPLLYFIKFFKL) form a helical membrane-spanning segment. A glycan (N-linked (GlcNAc...) asparagine) is linked at N84. 9 helical membrane passes run 96–116 (LQISILSWIITDFCLYWMLPS), 140–160 (LFSNSIETLLLLVTILLIDDL), 189–209 (LGIFNRITFPAFLILPGWFVM), 222–242 (LVMGFFSTTALLILVDTILFG), 247–267 (VVAEPFNVSSYIIAPLNNLLY), 282–302 (YYTHILVNMPQILGPGLIFFV), 310–330 (TPFLTVISGLLFLSVIPHQEL), 332–348 (FLIPLLPLACCSFDFTL), and 350–370 (WVQPWMLYTWYIFNIFMSILM). N408 and N473 each carry an N-linked (GlcNAc...) asparagine glycan.

Belongs to the glycosyltransferase 22 family. PIGZ subfamily.

The protein localises to the endoplasmic reticulum membrane. It functions in the pathway glycolipid biosynthesis; glycosylphosphatidylinositol-anchor biosynthesis. Alpha-1,2-mannosyltransferase involved in glycosylphosphatidylinositol-anchor biosynthesis. Transfers a fourth mannose to trimannosyl-GPIs during GPI precursor assembly. The presence of a fourth mannose in GPI is essential in fungi. The chain is GPI mannosyltransferase 4 (SMP3) from Candida albicans (strain SC5314 / ATCC MYA-2876) (Yeast).